We begin with the raw amino-acid sequence, 1130 residues long: Sodium/potassium/calcium exchanger 1 (1130 aa).

Residues 1–419 (MGKLIRMGTQ…DLFSVEDRRQ (419 aa)) lie on the Extracellular side of the membrane. The tract at residues 104–209 (PSIAMEDTPN…SPTATVRDRE (106 aa)) is disordered. The segment covering 125 to 136 (LKNSYSPTTAGT) has biased composition (polar residues). Residues 170 to 187 (PRGERKNSSPTHAREKGR) are compositionally biased toward basic and acidic residues. Residues asparagine 176 and asparagine 273 are each glycosylated (N-linked (GlcNAc...) asparagine). Residues 274–295 (ISTTPQGAVPQHTPATSEEQMT) form a disordered region. Positions 286–295 (TPATSEEQMT) are enriched in polar residues. The chain crosses the membrane as a helical span at residues 420-440 (GWVVLHIFGMMYVFVALAIVC). Over 441 to 464 (DEYFVPALGVITHKLQISEDVAGA) the chain is Cytoplasmic. Residues 461–501 (VAGATFMAAGGSAPELFTSLIGVFISHSNVGIGTIVGSAVF) form an Alpha-1 repeat. A helical membrane pass occupies residues 465 to 485 (TFMAAGGSAPELFTSLIGVFI). Over 486 to 489 (SHSN) the chain is Extracellular. A helical membrane pass occupies residues 490-510 (VGIGTIVGSAVFNILFVIGTC). Residues 511–530 (ALFSREILNLTWWPLFRDVS) lie on the Cytoplasmic side of the membrane. The helical transmembrane segment at 531–551 (FYILDLSMLIVFFLDSFIAWW) threads the bilayer. Position 552 (glutamate 552) is a topological domain, extracellular. The helical transmembrane segment at 553–573 (SLLLLLAYALYVFTMKWNKQI) threads the bilayer. The Cytoplasmic portion of the chain corresponds to 574-938 (ELWVKEQLSR…SLEWPDSRQK (365 aa)). The segment at 598-619 (PSEDAVEENEQQDSKKLKLPSV) is disordered. Phosphoserine is present on serine 625. The tract at residues 650-932 (GEARPSKDKQ…ENEEPLSLEW (283 aa)) is disordered. Residues 661–675 (SLNQEARVLSQTKAE) show a composition bias toward polar residues. The residue at position 690 (threonine 690) is a Phosphothreonine. Residues 703-715 (QEDDPGCQEDVDE) show a composition bias toward acidic residues. Residues 730–751 (ETETEGKKDEQEGETEAERKED) show a composition bias toward basic and acidic residues. Composition is skewed to acidic residues over residues 766–782 (GETE…GETE) and 802–820 (QEGE…GETE). A compositionally biased stretch (basic and acidic residues) spans 833–855 (AESKEVEQERETEAEGKDKHEGQ). Acidic residues-rich tracts occupy residues 870 to 880 (GETEANAEDQC) and 896 to 928 (DGGD…EEPL). The chain crosses the membrane as a helical span at residues 939–959 (QAIYLFLLPIVFPLWLTIPDV). The Extracellular segment spans residues 960 to 966 (RRQESRK). Residues 967–987 (FFVITFLGSIIWIAMFSYLMV) traverse the membrane as a helical segment. The Cytoplasmic segment spans residues 988–1002 (WWAHQVGETIGISEE). A helical transmembrane segment spans residues 1003–1023 (IMGLTILAAGTSIPDLITSVI). The stretch at 1010-1041 (AAGTSIPDLITSVIVARKGLGDMAVSSSVGSN) is one Alpha-2 repeat. Residues 1024 to 1041 (VARKGLGDMAVSSSVGSN) are Extracellular-facing. Residues 1042–1062 (IFDITVGLPVPWLLFSLINAL) form a helical membrane-spanning segment. Residues 1063-1070 (QPVPVSSN) are Cytoplasmic-facing. Residues 1071–1091 (GLFCAIVLLFLMLLFVIFSIA) form a helical membrane-spanning segment. Residues 1092-1099 (SCKWRMNK) lie on the Extracellular side of the membrane. A helical transmembrane segment spans residues 1100–1120 (ILGFTMFLLYFVFLVISVMLE). Residues 1121 to 1130 (DRIISCPVSV) are Cytoplasmic-facing.

The protein belongs to the Ca(2+):cation antiporter (CaCA) (TC 2.A.19) family. SLC24A subfamily. Post-translationally, the uncleaved signal sequence is required for efficient membrane targeting and proper membrane integration and topology.

The protein resides in the cell membrane. The enzyme catalyses Ca(2+)(out) + K(+)(out) + 4 Na(+)(in) = Ca(2+)(in) + K(+)(in) + 4 Na(+)(out). Functionally, calcium, potassium:sodium antiporter that transports 1 Ca(2+) and 1 K(+) in exchange for 4 Na(+). Critical component of the visual transduction cascade, controlling the calcium concentration of outer segments during light and darkness. Light causes a rapid lowering of cytosolic free calcium in the outer segment of both retinal rod and cone photoreceptors and the light-induced lowering of calcium is caused by extrusion via this protein which plays a key role in the process of light adaptation. This chain is Sodium/potassium/calcium exchanger 1, found in Mus musculus (Mouse).